Reading from the N-terminus, the 317-residue chain is Terpene synthase 3 (317 aa).

A DDxx(x)D/E motif motif is present at residues 96 to 101; it reads DDFYFE. The NDxxSxxxD/E motif motif lies at 223–231; it reads NDMVSFERE.

This sequence belongs to the terpene synthase family.

Terpene synthase that converts its substrate farnesyl diphosphate (FPP) into the sesquiterpene CAS 137235-51-9 as a major product. Is also able to convert FPP into 9-epi-(E)-caryophyllene, alpha-neoclovene, beta-neoclovene, and 3 yet unidentified sesquiterpenes. The sequence is that of Terpene synthase 3 from Dictyostelium purpureum (Slime mold).